A 434-amino-acid chain; its full sequence is Histidinol dehydrogenase (434 aa).

The NAD(+) site is built by Tyr-130, Gln-188, and Asn-211. 3 residues coordinate substrate: Ser-237, Gln-259, and His-262. Gln-259 and His-262 together coordinate Zn(2+). Active-site proton acceptor residues include Glu-326 and His-327. His-327, Asp-360, Glu-414, and His-419 together coordinate substrate. Asp-360 contributes to the Zn(2+) binding site. His-419 provides a ligand contact to Zn(2+).

It belongs to the histidinol dehydrogenase family. As to quaternary structure, homodimer. Requires Zn(2+) as cofactor.

The enzyme catalyses L-histidinol + 2 NAD(+) + H2O = L-histidine + 2 NADH + 3 H(+). The protein operates within amino-acid biosynthesis; L-histidine biosynthesis; L-histidine from 5-phospho-alpha-D-ribose 1-diphosphate: step 9/9. Its function is as follows. Catalyzes the sequential NAD-dependent oxidations of L-histidinol to L-histidinaldehyde and then to L-histidine. In Salmonella paratyphi A (strain ATCC 9150 / SARB42), this protein is Histidinol dehydrogenase.